The following is a 465-amino-acid chain: ATP synthase subunit beta (465 aa).

An ATP-binding site is contributed by glycine 152 to threonine 159.

The protein belongs to the ATPase alpha/beta chains family. As to quaternary structure, F-type ATPases have 2 components, CF(1) - the catalytic core - and CF(0) - the membrane proton channel. CF(1) has five subunits: alpha(3), beta(3), gamma(1), delta(1), epsilon(1). CF(0) has three main subunits: a(1), b(2) and c(9-12). The alpha and beta chains form an alternating ring which encloses part of the gamma chain. CF(1) is attached to CF(0) by a central stalk formed by the gamma and epsilon chains, while a peripheral stalk is formed by the delta and b chains.

The protein resides in the cell inner membrane. It catalyses the reaction ATP + H2O + 4 H(+)(in) = ADP + phosphate + 5 H(+)(out). In terms of biological role, produces ATP from ADP in the presence of a proton gradient across the membrane. The catalytic sites are hosted primarily by the beta subunits. The chain is ATP synthase subunit beta from Campylobacter concisus (strain 13826).